The following is a 205-amino-acid chain: Glycerol-3-phosphate acyltransferase (205 aa).

6 helical membrane passes run 5 to 25, 56 to 76, 84 to 104, 114 to 134, 144 to 164, and 165 to 185; these read LIAT…YIIA, ICVL…AIAL, VPAL…YFGF, IGVV…VAIL, LGSL…LPFF, and HYPL…LWRH.

It belongs to the PlsY family. As to quaternary structure, probably interacts with PlsX.

The protein localises to the cell membrane. It catalyses the reaction an acyl phosphate + sn-glycerol 3-phosphate = a 1-acyl-sn-glycero-3-phosphate + phosphate. It functions in the pathway lipid metabolism; phospholipid metabolism. Catalyzes the transfer of an acyl group from acyl-phosphate (acyl-PO(4)) to glycerol-3-phosphate (G3P) to form lysophosphatidic acid (LPA). This enzyme utilizes acyl-phosphate as fatty acyl donor, but not acyl-CoA or acyl-ACP. The chain is Glycerol-3-phosphate acyltransferase from Shouchella clausii (strain KSM-K16) (Alkalihalobacillus clausii).